We begin with the raw amino-acid sequence, 200 residues long: Cytochrome c biogenesis ATP-binding export protein CcmA (200 aa).

The 198-residue stretch at 3–200 (LSGRGLRCVR…AREMRIGAAA (198 aa)) folds into the ABC transporter domain. Residue 35-42 (GHNGAGKT) participates in ATP binding.

It belongs to the ABC transporter superfamily. CcmA exporter (TC 3.A.1.107) family. As to quaternary structure, the complex is composed of two ATP-binding proteins (CcmA) and two transmembrane proteins (CcmB).

It is found in the cell inner membrane. The enzyme catalyses heme b(in) + ATP + H2O = heme b(out) + ADP + phosphate + H(+). In terms of biological role, part of the ABC transporter complex CcmAB involved in the biogenesis of c-type cytochromes; once thought to export heme, this seems not to be the case, but its exact role is uncertain. Responsible for energy coupling to the transport system. The chain is Cytochrome c biogenesis ATP-binding export protein CcmA from Rhodopseudomonas palustris (strain BisB5).